A 194-amino-acid polypeptide reads, in one-letter code: Phosphoheptose isomerase (194 aa).

The region spanning 37 to 194 (ISNSFKQGGK…LIEFEMAKQA (158 aa)) is the SIS domain. Substrate is bound at residue 52-54 (NGG). Histidine 61 and glutamate 65 together coordinate Zn(2+). Residues glutamate 65, 93-94 (ND), 119-121 (STS), serine 124, and glutamine 172 each bind substrate. 2 residues coordinate Zn(2+): glutamine 172 and histidine 180.

Belongs to the SIS family. GmhA subfamily. Homotetramer. Zn(2+) serves as cofactor.

It is found in the cytoplasm. The catalysed reaction is 2 D-sedoheptulose 7-phosphate = D-glycero-alpha-D-manno-heptose 7-phosphate + D-glycero-beta-D-manno-heptose 7-phosphate. The protein operates within carbohydrate biosynthesis; D-glycero-D-manno-heptose 7-phosphate biosynthesis; D-glycero-alpha-D-manno-heptose 7-phosphate and D-glycero-beta-D-manno-heptose 7-phosphate from sedoheptulose 7-phosphate: step 1/1. It functions in the pathway bacterial outer membrane biogenesis; LOS core biosynthesis. In terms of biological role, catalyzes the isomerization of sedoheptulose 7-phosphate in D-glycero-D-manno-heptose 7-phosphate. The chain is Phosphoheptose isomerase from Haemophilus influenzae (strain ATCC 51907 / DSM 11121 / KW20 / Rd).